The following is a 350-amino-acid chain: Deoxyhypusine synthase-like protein (350 aa).

The protein belongs to the deoxyhypusine synthase family.

The chain is Deoxyhypusine synthase-like protein from Chlorobaculum tepidum (strain ATCC 49652 / DSM 12025 / NBRC 103806 / TLS) (Chlorobium tepidum).